Reading from the N-terminus, the 544-residue chain is Chaperonin GroEL 1 (544 aa).

ATP-binding positions include 30 to 33 (TLGP), K51, 87 to 91 (DGTTT), G415, 481 to 483 (DAL), and D497.

Belongs to the chaperonin (HSP60) family. Forms a cylinder of 14 subunits composed of two heptameric rings stacked back-to-back. Interacts with the co-chaperonin GroES.

It localises to the cytoplasm. It catalyses the reaction ATP + H2O + a folded polypeptide = ADP + phosphate + an unfolded polypeptide.. Together with its co-chaperonin GroES, plays an essential role in assisting protein folding. The GroEL-GroES system forms a nano-cage that allows encapsulation of the non-native substrate proteins and provides a physical environment optimized to promote and accelerate protein folding. The sequence is that of Chaperonin GroEL 1 from Chlamydia pneumoniae (Chlamydophila pneumoniae).